Consider the following 39-residue polypeptide: Potassium channel toxin alpha-KTx 2.23 (39 aa).

Intrachain disulfides connect C7-C29, C13-C34, and C17-C36.

Expressed by the venom gland.

It is found in the secreted. Blocks human voltage-gated potassium (Kv) channels Kv1.1/KCNA1, Kv1.2/KCNA2 and Kv1.3/KCNA3. In Centruroides bonito (Scorpion), this protein is Potassium channel toxin alpha-KTx 2.23.